A 742-amino-acid chain; its full sequence is Envelope glycoprotein H (742 aa).

Residues 1-23 (MRPGLPSYLIILAVCLFSHLLSS) form the signal peptide. Topologically, residues 24-719 (RYGAEAVSEP…VVDATDSRLL (696 aa)) are virion surface. N-linked (GlcNAc...) asparagine; by host glycosylation is found at N55, N62, N67, and N192. C195 and C211 are oxidised to a cystine. The segment at 217–280 (YLIDELRYVK…QTEKHELLVL (64 aa)) is interaction with gL. 3 cysteine pairs are disulfide-bonded: C330/C383, C495/C522, and C571/C624. 2 N-linked (GlcNAc...) asparagine; by host glycosylation sites follow: N641 and N700. A helical transmembrane segment spans residues 720 to 740 (MMSVYALSAIIGIYLLYRMLK). The Intravirion portion of the chain corresponds to 741-742 (TC).

It belongs to the herpesviridae glycoprotein H family. In terms of assembly, interacts with glycoprotein L (gL); this interaction is necessary for the correct processing and cell surface expression of gH. The heterodimer gH/gL seems to interact with gB trimers during fusion. Forms the envelope pentamer complex (PC) composed of gH, gL, UL128, UL130, and UL131A. The pentamer interacts with host NRP2. Forms the envelope trimer complex composed of gH, gL, and gO. The trimer interacts with host PDGFRA. The trimer also interacts with host EPHA2. The trimer also interacts with host TGFBR3. Interacts with UL116. In terms of processing, N-glycosylated, O-glycosylated, and sialylated.

The protein resides in the virion membrane. Its subcellular location is the host cell membrane. It localises to the host endosome membrane. The heterodimer glycoprotein H-glycoprotein L is required for the fusion of viral and plasma membranes leading to virus entry into the host cell. Following initial binding to host receptor, membrane fusion is mediated by the fusion machinery composed of gB and the heterodimer gH/gL. May also be involved in the fusion between the virion envelope and the outer nuclear membrane during virion morphogenesis. In human cytomegalovirus, forms two distincts complexes to mediate viral entry, a trimer and a pentamer at the surface of the virion envelope. The gH-gL-gO trimer is required for infection in fibroblasts by interacting with host PDGFRA, and in glioblastoma cells by interacting with host EPHA2. Thsi trimer may also be required in other cell types using host TGFBR3. The gH-gL-UL128-UL130-UL131A pentamer is essential for viral entry in epithelial, endothelial and myeloid cells via interaction with host NRP2. In Human cytomegalovirus (strain Merlin) (HHV-5), this protein is Envelope glycoprotein H.